The following is a 49-amino-acid chain: Small, acid-soluble spore protein O (49 aa).

The segment at 24–49 (GYNEEFSNEPLTEAQRQNNKKRKKNQ) is disordered.

Belongs to the SspO family.

Its subcellular location is the spore core. This chain is Small, acid-soluble spore protein O, found in Geobacillus kaustophilus (strain HTA426).